Reading from the N-terminus, the 265-residue chain is Isoprenyl transferase (265 aa).

Asp35 is an active-site residue. Asp35 contributes to the Mg(2+) binding site. Substrate contacts are provided by residues 36-39 (GNGR), Trp40, Arg48, His52, and 80-82 (STE). The Proton acceptor role is filled by Asn83. Substrate-binding positions include Trp84, Arg86, Arg203, and 209–211 (RIS). Glu222 lines the Mg(2+) pocket.

Belongs to the UPP synthase family. Homodimer. Requires Mg(2+) as cofactor.

Catalyzes the condensation of isopentenyl diphosphate (IPP) with allylic pyrophosphates generating different type of terpenoids. The sequence is that of Isoprenyl transferase from Prochlorococcus marinus (strain MIT 9313).